The chain runs to 323 residues: MLSVNLASLPIVEDMINRKEELNLEVITLENGATVLDCGVNVMGSFEAGKLFTKICLGGLAHVGISISGSLDNKLVLPCVKIKTSHPAIATLGSQKAGWSVSVGKYFAMGSGPARALAMMPKATYEEIDYRDEADIAILCLESSQLPDENVADHVAEKCGVDVSKVYLLVAPTASMVGAVQISGRVVENGTYKMLEALHFDVRKVKFAAGIAPVAPVIGDDLKMMGATNDMVLYGGRTYYYVKSDEGDDIEKLCKSLPSCSAETYGKPFLEVFKEANYDFYKIDKGMFAPAVVTINDLRTGKLMSYGETNVEVLKKSLKFSQL.

It belongs to the MCH family.

Its subcellular location is the cytoplasm. The catalysed reaction is 5,10-methenyl-5,6,7,8-tetrahydromethanopterin + H2O = N(5)-formyl-5,6,7,8-tetrahydromethanopterin + H(+). It functions in the pathway one-carbon metabolism; methanogenesis from CO(2); 5,10-methenyl-5,6,7,8-tetrahydromethanopterin from CO(2): step 3/3. In terms of biological role, catalyzes the reversible interconversion of 5-formyl-H(4)MPT to methenyl-H(4)MPT(+). This is Methenyltetrahydromethanopterin cyclohydrolase from Methanococcus maripaludis (strain C7 / ATCC BAA-1331).